The chain runs to 326 residues: Structural protein ORF326a (326 aa).

The disordered stretch occupies residues 1–28; sequence MSTTFRGKKEEEEEEEEEKEEKEEELFN. A compositionally biased stretch (acidic residues) spans 11-26; the sequence is EEEEEEEEKEEKEEEL.

The protein resides in the virion. The sequence is that of Structural protein ORF326a from Acidianus two-tailed virus (ATV).